The following is a 1636-amino-acid chain: Tyrosine-protein phosphatase non-receptor type 23 (1636 aa).

One can recognise a BRO1 domain in the interval Pro-8 to Leu-394. TPR repeat units lie at residues Ala-250 to Ala-283 and Glu-374 to Thr-407. The stretch at Lys-550–Gln-623 forms a coiled coil. The span at Glu-701–Lys-714 shows a compositional bias: basic and acidic residues. Disordered regions lie at residues Glu-701 to Ala-812 and Gln-888 to Gly-1151. Ser-733 carries the post-translational modification Phosphoserine. Positions His-770–Gly-1130 are his. 2 stretches are compositionally biased toward pro residues: residues Arg-898–Tyr-922 and Arg-950–His-962. Arg-950 is modified (omega-N-methylarginine). A run of 6 repeats spans residues Pro-953 to Gln-954, Pro-955 to Gln-956, Pro-957 to His-958, Pro-959 to Gln-960, Pro-961 to His-962, and Pro-963 to Ser-964. Positions Pro-953–Ser-964 are 6 X 2 AA approximate tandem repeats of P-Q. 3 stretches are compositionally biased toward pro residues: residues Leu-983–Pro-1002, Phe-1036–Ala-1050, and His-1083–Cys-1109. The span at Leu-1120–Thr-1131 shows a compositional bias: polar residues. 2 positions are modified to phosphoserine: Ser-1122 and Ser-1123. Thr-1131 is subject to Phosphothreonine. A Tyrosine-protein phosphatase domain is found at Asp-1192–His-1452. The active-site Phosphocysteine intermediate is the Cys-1392. Residues Leu-1513–Thr-1636 form a disordered region. Composition is skewed to pro residues over residues Pro-1523 to Ser-1533 and Ser-1542 to Pro-1556. Over residues Ala-1567 to Ala-1587 the composition is skewed to low complexity. An Omega-N-methylarginine modification is found at Arg-1615.

The protein belongs to the protein-tyrosine phosphatase family. Non-receptor class subfamily. Interacts with GRAP2 and GRB2. Interacts with UBAP1. Interacts with CHMP4B.

It is found in the nucleus. The protein localises to the cytoplasm. The protein resides in the cytoplasmic vesicle. It localises to the endosome. Its subcellular location is the cytoskeleton. It is found in the cilium basal body. The protein localises to the early endosome. The enzyme catalyses O-phospho-L-tyrosyl-[protein] + H2O = L-tyrosyl-[protein] + phosphate. Functionally, plays a role in sorting of endocytic ubiquitinated cargos into multivesicular bodies (MVBs) via its interaction with the ESCRT-I complex (endosomal sorting complex required for transport I), and possibly also other ESCRT complexes. May act as a negative regulator of Ras-mediated mitogenic activity. Plays a role in ciliogenesis. The polypeptide is Tyrosine-protein phosphatase non-receptor type 23 (PTPN23) (Homo sapiens (Human)).